The sequence spans 677 residues: Methionine--tRNA ligase (677 aa).

The short motif at 15–25 (PYANGSIHLGH) is the 'HIGH' region element. Zn(2+) contacts are provided by Cys-146, Cys-149, Cys-159, and Cys-162. The short motif at 333–337 (KMSKS) is the 'KMSKS' region element. Residue Lys-336 coordinates ATP. The region spanning 575-677 (DFAKVDLRVA…AGAKPGHQVK (103 aa)) is the tRNA-binding domain.

The protein belongs to the class-I aminoacyl-tRNA synthetase family. MetG type 1 subfamily. Homodimer. Requires Zn(2+) as cofactor.

Its subcellular location is the cytoplasm. The enzyme catalyses tRNA(Met) + L-methionine + ATP = L-methionyl-tRNA(Met) + AMP + diphosphate. Functionally, is required not only for elongation of protein synthesis but also for the initiation of all mRNA translation through initiator tRNA(fMet) aminoacylation. The polypeptide is Methionine--tRNA ligase (Escherichia coli O81 (strain ED1a)).